A 79-amino-acid chain; its full sequence is D-alanyl carrier protein (79 aa).

The 76-residue stretch at 1–76 (MEEQVLSLLE…RVMAYVKKRV (76 aa)) folds into the Carrier domain. Serine 34 bears the O-(pantetheine 4'-phosphoryl)serine mark.

It belongs to the DltC family. In terms of processing, 4'-phosphopantetheine is transferred from CoA to a specific serine of apo-DCP.

The protein localises to the cytoplasm. It functions in the pathway cell wall biogenesis; lipoteichoic acid biosynthesis. Carrier protein involved in the D-alanylation of lipoteichoic acid (LTA). The loading of thioester-linked D-alanine onto DltC is catalyzed by D-alanine--D-alanyl carrier protein ligase DltA. The DltC-carried D-alanyl group is further transferred to cell membrane phosphatidylglycerol (PG) by forming an ester bond, probably catalyzed by DltD. D-alanylation of LTA plays an important role in modulating the properties of the cell wall in Gram-positive bacteria, influencing the net charge of the cell wall. The chain is D-alanyl carrier protein from Abiotrophia defectiva (Streptococcus defectivus).